The chain runs to 668 residues: Small ribosomal subunit protein mS81 (rPPR8) (668 aa).

Residues 1–36 constitute a mitochondrion transit peptide; the sequence is MRYQQWRLMLLRSYHRSHLPYLSPCSQVTSISSRSF. PPR repeat units follow at residues 286 to 320, 321 to 355, 396 to 430, 431 to 465, 466 to 496, 502 to 537, and 543 to 577; these read DEKT…GYEV, EIET…SSSS, TDSL…GYVP, SGDM…GNNL, DDKA…MVGN, ADYS…QLKP, and KSLV…GFPP.

The protein belongs to the PPR family. P subfamily. Component of the mitochondrial ribosome small subunit.

It is found in the mitochondrion. This is Small ribosomal subunit protein mS81 (rPPR8) from Arabidopsis thaliana (Mouse-ear cress).